Here is a 111-residue protein sequence, read N- to C-terminus: Putative pterin-4-alpha-carbinolamine dehydratase (111 aa).

The protein belongs to the pterin-4-alpha-carbinolamine dehydratase family.

The enzyme catalyses (4aS,6R)-4a-hydroxy-L-erythro-5,6,7,8-tetrahydrobiopterin = (6R)-L-erythro-6,7-dihydrobiopterin + H2O. This is Putative pterin-4-alpha-carbinolamine dehydratase from Alkaliphilus metalliredigens (strain QYMF).